Here is a 368-residue protein sequence, read N- to C-terminus: Glutamate 5-kinase (368 aa).

An ATP-binding site is contributed by Lys-13. Substrate is bound by residues Ser-54, Asp-141, and Asn-153. 173 to 174 provides a ligand contact to ATP; sequence SD. The PUA domain maps to 278–355; it reads RGEITVDAGA…AEIEAVLGYP (78 aa).

The protein belongs to the glutamate 5-kinase family.

The protein localises to the cytoplasm. The enzyme catalyses L-glutamate + ATP = L-glutamyl 5-phosphate + ADP. The protein operates within amino-acid biosynthesis; L-proline biosynthesis; L-glutamate 5-semialdehyde from L-glutamate: step 1/2. Catalyzes the transfer of a phosphate group to glutamate to form L-glutamate 5-phosphate. This Dinoroseobacter shibae (strain DSM 16493 / NCIMB 14021 / DFL 12) protein is Glutamate 5-kinase.